A 429-amino-acid polypeptide reads, in one-letter code: Trigger factor (429 aa).

The PPIase FKBP-type domain maps to 163 to 248 (GDFVVIDFVG…IKEIKVKETP (86 aa)).

It belongs to the FKBP-type PPIase family. Tig subfamily.

The protein resides in the cytoplasm. It catalyses the reaction [protein]-peptidylproline (omega=180) = [protein]-peptidylproline (omega=0). In terms of biological role, involved in protein export. Acts as a chaperone by maintaining the newly synthesized protein in an open conformation. Functions as a peptidyl-prolyl cis-trans isomerase. The polypeptide is Trigger factor (Halothermothrix orenii (strain H 168 / OCM 544 / DSM 9562)).